We begin with the raw amino-acid sequence, 332 residues long: Large ribosomal subunit protein mL44 (332 aa).

A mitochondrion-targeting transit peptide spans 1–30 (MASGLTRLLLRGPRCLLATAGLTLIPPVRG). An RNase III domain is found at 86 to 228 (DLLKTAFVNS…LITQMTGKEL (143 aa)). One can recognise a DRBM domain in the interval 236–306 (NPMGLLVQEL…ARVALRKLYG (71 aa)).

The protein belongs to the ribonuclease III family. Mitochondrion-specific ribosomal protein mL44 subfamily. As to quaternary structure, component of the mitochondrial ribosome large subunit (39S) which comprises a 16S rRNA and about 50 distinct proteins.

The protein localises to the mitochondrion. Functionally, component of the 39S subunit of mitochondrial ribosome. May have a function in the assembly/stability of nascent mitochondrial polypeptides exiting the ribosome. This is Large ribosomal subunit protein mL44 (MRPL44) from Bos taurus (Bovine).